A 207-amino-acid polypeptide reads, in one-letter code: Large ribosomal subunit protein bL25 (207 aa).

Residues 171-207 form a disordered region; the sequence is EEETVVTVSAPRAEEEPTTTEAPEPEAVHGKDEEPVE. Over residues 196-207 the composition is skewed to basic and acidic residues; it reads EAVHGKDEEPVE.

This sequence belongs to the bacterial ribosomal protein bL25 family. CTC subfamily. Part of the 50S ribosomal subunit; part of the 5S rRNA/L5/L18/L25 subcomplex. Contacts the 5S rRNA. Binds to the 5S rRNA independently of L5 and L18.

Functionally, this is one of the proteins that binds to the 5S RNA in the ribosome where it forms part of the central protuberance. In Listeria monocytogenes serotype 4b (strain F2365), this protein is Large ribosomal subunit protein bL25.